Consider the following 838-residue polypeptide: Probable beta-glucosidase I (838 aa).

Residues Asn-57 and Asn-197 are each glycosylated (N-linked (GlcNAc...) asparagine). Residue Asp-225 is part of the active site. One can recognise a PA14 domain in the interval 395–555 (EGEKGFKFRV…GQEELISKAA (161 aa)). The N-linked (GlcNAc...) asparagine glycan is linked to Asn-493.

This sequence belongs to the glycosyl hydrolase 3 family.

The protein resides in the secreted. It catalyses the reaction Hydrolysis of terminal, non-reducing beta-D-glucosyl residues with release of beta-D-glucose.. Its pathway is glycan metabolism; cellulose degradation. In terms of biological role, beta-glucosidases are one of a number of cellulolytic enzymes involved in the degradation of cellulosic biomass. Catalyzes the last step releasing glucose from the inhibitory cellobiose. This is Probable beta-glucosidase I (bglI) from Aspergillus clavatus (strain ATCC 1007 / CBS 513.65 / DSM 816 / NCTC 3887 / NRRL 1 / QM 1276 / 107).